Consider the following 277-residue polypeptide: Putative glucose-6-phosphate/phosphate-translocator-like protein 1 (277 aa).

The next 5 helical transmembrane spans lie at 8–28, 46–66, 124–143, 153–173, and 230–250; these read VLPS…WWAL, LWLT…VSWV, MIGF…RNIF, VSVM…VTPF, and PLKH…FIYS.

This sequence belongs to the TPT transporter family. GPT (TC 2.A.7.9) subfamily.

The protein localises to the membrane. The polypeptide is Putative glucose-6-phosphate/phosphate-translocator-like protein 1 (Arabidopsis thaliana (Mouse-ear cress)).